A 464-amino-acid polypeptide reads, in one-letter code: tRNA(Ile2) 2-agmatinylcytidine synthetase TiaS (464 aa).

Belongs to the TiaS family.

It is found in the cytoplasm. The catalysed reaction is cytidine(34) in tRNA(Ile2) + agmatine + ATP + H2O = 2-agmatinylcytidine(34) in tRNA(Ile2) + AMP + 2 phosphate + 2 H(+). Functionally, ATP-dependent agmatine transferase that catalyzes the formation of 2-agmatinylcytidine (agm2C) at the wobble position (C34) of tRNA(Ile2), converting the codon specificity from AUG to AUA. The polypeptide is tRNA(Ile2) 2-agmatinylcytidine synthetase TiaS (Ignisphaera aggregans (strain DSM 17230 / JCM 13409 / AQ1.S1)).